Reading from the N-terminus, the 357-residue chain is Inositol-tetrakisphosphate 1-kinase 3 (357 aa).

1D-myo-inositol 1,3,4-trisphosphate contacts are provided by Lys-56 and Lys-98. Residues Arg-133 and Lys-183 each coordinate ATP. His-190 and Lys-222 together coordinate 1D-myo-inositol 1,3,4-trisphosphate. ATP contacts are provided by residues 211-222 (QEFVNHGGVLFK), Ser-237, and Ser-262. Asp-302, Asp-317, and Asn-319 together coordinate Mg(2+). Asn-319 contributes to the 1D-myo-inositol 1,3,4-trisphosphate binding site.

This sequence belongs to the ITPK1 family. In terms of assembly, monomer. Mg(2+) is required as a cofactor.

The catalysed reaction is 1D-myo-inositol 3,4,5,6-tetrakisphosphate + ATP = 1D-myo-inositol 1,3,4,5,6-pentakisphosphate + ADP + H(+). The enzyme catalyses 1D-myo-inositol 1,3,4-trisphosphate + ATP = 1D-myo-inositol 1,3,4,5-tetrakisphosphate + ADP + H(+). It carries out the reaction 1D-myo-inositol 1,3,4-trisphosphate + ATP = 1D-myo-inositol 1,3,4,6-tetrakisphosphate + ADP + H(+). Kinase that can phosphorylate various inositol polyphosphate such as Ins(3,4,5,6)P4 or Ins(1,3,4)P3 and participates in phytic acid biosynthesis in developing seeds. Phytic acid is the primary storage form of phosphorus in cereal grains and other plant seeds. This is Inositol-tetrakisphosphate 1-kinase 3 (ITPK3) from Oryza sativa subsp. indica (Rice).